A 364-amino-acid chain; its full sequence is Peroxisomal membrane protein PEX16 (364 aa).

Position 200 is a phosphoserine (S200).

The protein belongs to the peroxin-16 family.

The protein resides in the peroxisome membrane. Its function is as follows. Involved in the biogenesis of peroxisomes. This is Peroxisomal membrane protein PEX16 (pex16) from Schizosaccharomyces pombe (strain 972 / ATCC 24843) (Fission yeast).